The primary structure comprises 196 residues: MTKKDEKGSNLDIPVSRLAESYKEKVVPALMERFQYKNIMMVPKLTKISINIGVGEAASEPKLLETAMQELAQITGQKPQIRKARKAISNFKLREGQPIGCRVTLRKKYMYEFLDRFVTLAVPRIRDFRGLSNTSFDGRGNYTLGIREQIIFPEIDIDKVPRIQGMDISFVTTARTDEEAFALLSELGMPFKKKNN.

This sequence belongs to the universal ribosomal protein uL5 family. In terms of assembly, part of the 50S ribosomal subunit; part of the 5S rRNA/L5/L18/L25 subcomplex. Contacts the 5S rRNA and the P site tRNA. Forms a bridge to the 30S subunit in the 70S ribosome.

In terms of biological role, this is one of the proteins that bind and probably mediate the attachment of the 5S RNA into the large ribosomal subunit, where it forms part of the central protuberance. In the 70S ribosome it contacts protein S13 of the 30S subunit (bridge B1b), connecting the 2 subunits; this bridge is implicated in subunit movement. Contacts the P site tRNA; the 5S rRNA and some of its associated proteins might help stabilize positioning of ribosome-bound tRNAs. The chain is Large ribosomal subunit protein uL5 from Prosthecochloris aestuarii (strain DSM 271 / SK 413).